A 502-amino-acid chain; its full sequence is 4-hydroxy-3-methylbut-2-enyl diphosphate reductase, chloroplastic (502 aa).

A chloroplast-targeting transit peptide spans 1–48; sequence MQVLPQTRVQGVPSGRNLSCSKAVGGTPLRALTRDVVRPARSVNVHVV. Cys140 provides a ligand contact to [4Fe-4S] cluster. A (2E)-4-hydroxy-3-methylbut-2-enyl diphosphate-binding site is contributed by His170. [4Fe-4S] cluster is bound at residue Cys232. His260 contacts (2E)-4-hydroxy-3-methylbut-2-enyl diphosphate. The active-site Proton donor is Glu262. Thr325 contacts (2E)-4-hydroxy-3-methylbut-2-enyl diphosphate. Cys363 contacts [4Fe-4S] cluster. (2E)-4-hydroxy-3-methylbut-2-enyl diphosphate-binding positions include 398-400 and Ser461; that span reads SSN.

The protein belongs to the IspH family. In terms of assembly, homodimer. The cofactor is [4Fe-4S] cluster.

The protein resides in the plastid. The protein localises to the chloroplast stroma. The enzyme catalyses dimethylallyl diphosphate + 2 oxidized [2Fe-2S]-[ferredoxin] + H2O = (2E)-4-hydroxy-3-methylbut-2-enyl diphosphate + 2 reduced [2Fe-2S]-[ferredoxin] + 2 H(+). The catalysed reaction is isopentenyl diphosphate + 2 oxidized [2Fe-2S]-[ferredoxin] + H2O = (2E)-4-hydroxy-3-methylbut-2-enyl diphosphate + 2 reduced [2Fe-2S]-[ferredoxin] + 2 H(+). It functions in the pathway isoprenoid biosynthesis; dimethylallyl diphosphate biosynthesis; dimethylallyl diphosphate from (2E)-4-hydroxy-3-methylbutenyl diphosphate: step 1/1. Its pathway is isoprenoid biosynthesis; isopentenyl diphosphate biosynthesis via DXP pathway; isopentenyl diphosphate from 1-deoxy-D-xylulose 5-phosphate: step 6/6. In terms of biological role, enzyme of the plastid non-mevalonate pathway for isoprenoid biosynthesis that converts 1-hydroxy-2-methyl-2-(E)-butenyl 4-diphosphate into isopentenyl diphosphate (IPP) and dimethylallyl diphosphate (DMAPP). This is 4-hydroxy-3-methylbut-2-enyl diphosphate reductase, chloroplastic from Botryococcus braunii (Green alga).